Consider the following 328-residue polypeptide: DNA-directed RNA polymerase subunit alpha (328 aa).

An alpha N-terminal domain (alpha-NTD) region spans residues 1–231 (MQTNLLKPKA…EQLAVFAQLE (231 aa)). The segment at 248–328 (FDPILLRPVD…NWPPQGLDKR (81 aa)) is alpha C-terminal domain (alpha-CTD).

This sequence belongs to the RNA polymerase alpha chain family. In terms of assembly, homodimer. The RNAP catalytic core consists of 2 alpha, 1 beta, 1 beta' and 1 omega subunit. When a sigma factor is associated with the core the holoenzyme is formed, which can initiate transcription.

The enzyme catalyses RNA(n) + a ribonucleoside 5'-triphosphate = RNA(n+1) + diphosphate. DNA-dependent RNA polymerase catalyzes the transcription of DNA into RNA using the four ribonucleoside triphosphates as substrates. In Leptothrix cholodnii (strain ATCC 51168 / LMG 8142 / SP-6) (Leptothrix discophora (strain SP-6)), this protein is DNA-directed RNA polymerase subunit alpha.